We begin with the raw amino-acid sequence, 82 residues long: RNA-binding protein BH0128 (82 aa).

The protein belongs to the eukaryotic ribosomal protein eL8 family.

The protein is RNA-binding protein BH0128 of Halalkalibacterium halodurans (strain ATCC BAA-125 / DSM 18197 / FERM 7344 / JCM 9153 / C-125) (Bacillus halodurans).